Reading from the N-terminus, the 368-residue chain is Glutaminyl-peptide cyclotransferase (368 aa).

Residues 1–33 (MARERRDSKAATFFCLAWALCLALPGFPQHVSG) form the signal peptide. The N-linked (GlcNAc...) asparagine glycan is linked to asparagine 53. Cysteine 143 and cysteine 169 form a disulfide bridge. Aspartate 164 contacts Zn(2+). Residue glutamate 207 is the Proton acceptor of the active site. A Zn(2+)-binding site is contributed by glutamate 208. The Proton acceptor role is filled by aspartate 254. The N-linked (GlcNAc...) asparagine glycan is linked to asparagine 292. Residue histidine 336 coordinates Zn(2+). Asparagine 352 carries an N-linked (GlcNAc...) asparagine glycan.

This sequence belongs to the glutaminyl-peptide cyclotransferase family. As to expression, expressed by the venom gland.

It is found in the secreted. The enzyme catalyses N-terminal L-glutaminyl-[peptide] = N-terminal 5-oxo-L-prolyl-[peptide] + NH4(+). Responsible for the biosynthesis of pyroglutamyl peptides. Has a bias against acidic and tryptophan residues adjacent to the N-terminal glutaminyl residue and a lack of importance of chain length after the second residue. Also catalyzes N-terminal pyroglutamate formation. This is Glutaminyl-peptide cyclotransferase (QPCT) from Gloydius blomhoffii (Mamushi).